The sequence spans 183 residues: MKTIVIDKSMSVDIEYSINAIDQCNITSLKDLQIQPFDQCIILWNDKIIFRGYCIDARLSQSFGQQQYEYTINSPLWILSQQKTTAKTTFLQIFLKECCNLCNLELDYQLDSNPLIYIEESSYFDALKKCILYTKNYNTRFYVDYEYNSLIFTDKISGQHPKEEKVVGYEFEWDTEIINQVRW.

This is an uncharacterized protein from Methanocaldococcus jannaschii (strain ATCC 43067 / DSM 2661 / JAL-1 / JCM 10045 / NBRC 100440) (Methanococcus jannaschii).